The chain runs to 253 residues: uncharacterized protein (253 aa).

10–34 serves as a coordination point for NADP(+); that stretch reads LVTGASSGLGRGLALWLARRGVRVF. Ser-142 is a substrate binding site. The Proton acceptor role is filled by Tyr-155.

This sequence belongs to the short-chain dehydrogenases/reductases (SDR) family.

This is an uncharacterized protein from Myxococcus xanthus (strain DK1622).